The sequence spans 509 residues: Dihydrolipoyl dehydrogenase, mitochondrial (509 aa).

Residues 1–35 (MQSWSRVYCSLAKRGHFNRISHGLQGVSSVPLRTY) constitute a mitochondrion transit peptide. The residue at position 66 (Lys-66) is an N6-acetyllysine; alternate. N6-succinyllysine; alternate is present on Lys-66. FAD is bound by residues 71–80 (EKNDTLGGTC) and Lys-89. A disulfide bridge links Cys-80 with Cys-85. N6-acetyllysine; alternate occurs at positions 122, 132, and 143. 3 positions are modified to N6-succinyllysine; alternate: Lys-122, Lys-132, and Lys-143. Gly-154 lines the FAD pocket. Residues Lys-159 and Lys-166 each carry the N6-succinyllysine modification. Residue 183–185 (TGS) coordinates FAD. NAD(+) is bound by residues 220 to 227 (GAGVIGVE) and Glu-243. 2 positions are modified to N6-succinyllysine: Lys-273 and Lys-277. Val-278 contacts NAD(+). Residues Ser-285 and Ser-297 each carry the phosphoserine modification. Gly-314 is an NAD(+) binding site. An N6-acetyllysine modification is found at Lys-346. Residues Asp-355 and 361 to 364 (MLAH) each bind FAD. Residue Lys-410 is modified to N6-acetyllysine; alternate. An N6-succinyllysine; alternate modification is found at Lys-410. N6-acetyllysine occurs at positions 417 and 420. Lys-430 bears the N6-succinyllysine mark. The active-site Proton acceptor is His-487. Ser-502 is modified (phosphoserine). Lys-505 bears the N6-acetyllysine; alternate mark. Lys-505 is subject to N6-succinyllysine; alternate.

This sequence belongs to the class-I pyridine nucleotide-disulfide oxidoreductase family. Homodimer. Part of the multimeric pyruvate dehydrogenase complex that contains multiple copies of pyruvate dehydrogenase (subunits PDHA (PDHA1 or PDHA2) and PDHB, E1), dihydrolipoamide acetyltransferase (DLAT, E2) and lipoamide dehydrogenase (DLD, E3). These subunits are bound to an inner core composed of about 48 DLAT and 12 PDHX molecules (by non covalent bonds). The 2-oxoglutarate dehydrogenase complex is composed of OGDH (2-oxoglutarate dehydrogenase; E1), DLST (dihydrolipoamide succinyltransferase; E2), DLD (dihydrolipoamide dehydrogenase; E3) and the assembly factor KGD4. It contains multiple copies of the three enzymatic components (E1, E2 and E3). In the nucleus, the 2-oxoglutarate dehydrogenase complex associates with KAT2A. Interacts with PDHX. FAD is required as a cofactor. Tyrosine phosphorylated.

The protein resides in the mitochondrion matrix. The protein localises to the nucleus. It is found in the cell projection. It localises to the cilium. Its subcellular location is the flagellum. The protein resides in the cytoplasmic vesicle. The protein localises to the secretory vesicle. It is found in the acrosome. The catalysed reaction is N(6)-[(R)-dihydrolipoyl]-L-lysyl-[protein] + NAD(+) = N(6)-[(R)-lipoyl]-L-lysyl-[protein] + NADH + H(+). Functionally, lipoamide dehydrogenase is a component of the glycine cleavage system as well as an E3 component of three alpha-ketoacid dehydrogenase complexes (pyruvate-, alpha-ketoglutarate-, and branched-chain amino acid-dehydrogenase complex). The 2-oxoglutarate dehydrogenase complex is mainly active in the mitochondrion. A fraction of the 2-oxoglutarate dehydrogenase complex also localizes in the nucleus and is required for lysine succinylation of histones: associates with KAT2A on chromatin and provides succinyl-CoA to histone succinyltransferase KAT2A. In monomeric form may have additional moonlighting function as serine protease. Involved in the hyperactivation of spermatazoa during capacitation and in the spermatazoal acrosome reaction. The protein is Dihydrolipoyl dehydrogenase, mitochondrial (DLD) of Cricetulus griseus (Chinese hamster).